A 375-amino-acid chain; its full sequence is Muconate cycloisomerase 1 (375 aa).

The Proton acceptor role is filled by lysine 171. 3 residues coordinate Mn(2+): aspartate 200, glutamate 226, and aspartate 251. Residue glutamate 329 is the Proton donor of the active site.

It belongs to the mandelate racemase/muconate lactonizing enzyme family. In terms of assembly, homooctamer. Requires Mn(2+) as cofactor.

It carries out the reaction (S)-muconolactone = cis,cis-muconate + H(+). Its pathway is aromatic compound metabolism; beta-ketoadipate pathway; 5-oxo-4,5-dihydro-2-furylacetate from catechol: step 2/3. Its function is as follows. Catalyzes a syn cycloisomerization. The chain is Muconate cycloisomerase 1 (catB) from Pseudomonas putida (Arthrobacter siderocapsulatus).